We begin with the raw amino-acid sequence, 312 residues long: Ribose-phosphate pyrophosphokinase (312 aa).

ATP contacts are provided by residues 34 to 36 and 93 to 94; these read DGE and RQ. Histidine 128 and aspartate 167 together coordinate Mg(2+). Lysine 191 is an active-site residue. 2 residues coordinate D-ribose 5-phosphate: arginine 193 and aspartate 217.

Belongs to the ribose-phosphate pyrophosphokinase family. Class I subfamily. In terms of assembly, homohexamer. The cofactor is Mg(2+).

It localises to the cytoplasm. It catalyses the reaction D-ribose 5-phosphate + ATP = 5-phospho-alpha-D-ribose 1-diphosphate + AMP + H(+). It participates in metabolic intermediate biosynthesis; 5-phospho-alpha-D-ribose 1-diphosphate biosynthesis; 5-phospho-alpha-D-ribose 1-diphosphate from D-ribose 5-phosphate (route I): step 1/1. Its function is as follows. Involved in the biosynthesis of the central metabolite phospho-alpha-D-ribosyl-1-pyrophosphate (PRPP) via the transfer of pyrophosphoryl group from ATP to 1-hydroxyl of ribose-5-phosphate (Rib-5-P). The protein is Ribose-phosphate pyrophosphokinase of Baumannia cicadellinicola subsp. Homalodisca coagulata.